Here is a 143-residue protein sequence, read N- to C-terminus: Myosin 1 light chain cam2 (143 aa).

3 consecutive EF-hand domains span residues 6–41 (EQTD…LGIN), 75–110 (ESEE…LGEK), and 111–143 (LSDN…IMAK).

This sequence belongs to the calmodulin family. Interacts with myo1 and pik1.

It localises to the cytoplasm. The protein resides in the prospore membrane. Plays a role in meiosis and sporulation. This is Myosin 1 light chain cam2 from Schizosaccharomyces pombe (strain 972 / ATCC 24843) (Fission yeast).